A 927-amino-acid chain; its full sequence is Transmembrane protein 132 homolog (927 aa).

The N-terminal stretch at 1-18 is a signal peptide; it reads MLKKLWICISCIVTTALS. The helical transmembrane segment at 749–769 threads the bilayer; it reads FHIFVLTIIGLIILFLFISFV. The disordered stretch occupies residues 789–842; the sequence is LSSSSGSNSRQEETNEWVWLSQPQPPSSTISSGYSGNKSTAERQSSNGDDPSRT. Over residues 817-842 the composition is skewed to polar residues; that stretch reads TISSGYSGNKSTAERQSSNGDDPSRT.

The protein belongs to the TMEM132 family. Interacts with gex-3. In terms of tissue distribution, specifically expressed in neurons.

It localises to the membrane. Regulates neuronal morphology via inhibition of the WAVE regulatory complex (WCR), a complex that controls F-actin cytoskeletal dynamics. The sequence is that of Transmembrane protein 132 homolog from Caenorhabditis elegans.